We begin with the raw amino-acid sequence, 302 residues long: tRNA dimethylallyltransferase (302 aa).

Gly8–Ser15 is a binding site for ATP. Ser10–Ser15 contacts substrate. Residues Asp33–Ser36 form an interaction with substrate tRNA region.

The protein belongs to the IPP transferase family. As to quaternary structure, monomer. Mg(2+) is required as a cofactor.

It catalyses the reaction adenosine(37) in tRNA + dimethylallyl diphosphate = N(6)-dimethylallyladenosine(37) in tRNA + diphosphate. Catalyzes the transfer of a dimethylallyl group onto the adenine at position 37 in tRNAs that read codons beginning with uridine, leading to the formation of N6-(dimethylallyl)adenosine (i(6)A). This is tRNA dimethylallyltransferase from Helicobacter hepaticus (strain ATCC 51449 / 3B1).